We begin with the raw amino-acid sequence, 407 residues long: TOM1-like protein 1 (407 aa).

Gly2 carries the N-acetylglycine modification. A VHS domain is found at 55–183 (ATTENLEEPD…SLKARGIRFP (129 aa)). The region spanning 228-315 (FTAEQTKEAF…TLSKYEEMNK (88 aa)) is the GAT domain. The segment at 315–407 (KPSAPLTSHE…SSKNDDLIRF (93 aa)) is disordered. A Phosphoserine modification is found at Ser337. Positions 337-347 (SPIHGREESLV) are enriched in basic and acidic residues. The segment covering 353-364 (VRGGFHGGGGSG) has biased composition (gly residues). Residues 388-407 (PDHDPKKEQSSSKNDDLIRF) are compositionally biased toward basic and acidic residues.

This sequence belongs to the TOM1 family. As to expression, ubiquitously expressed.

The protein localises to the membrane. Functionally, might contribute to the loading of the ESCRT machinery. This Arabidopsis thaliana (Mouse-ear cress) protein is TOM1-like protein 1.